A 354-amino-acid polypeptide reads, in one-letter code: Probable protein phosphatase 2C 69 (354 aa).

One can recognise a PPM-type phosphatase domain in the interval 33-279 (SYGYASSAGK…DNITCVVVRF (247 aa)). Mn(2+) is bound by residues D69, G70, D231, and D270. The tract at residues 289 to 354 (HISSSSSKEA…LERNSVTDKV (66 aa)) is disordered. Polar residues-rich tracts occupy residues 309–328 (ISSN…PENV) and 336–348 (ASRS…LERN).

The protein belongs to the PP2C family. Mg(2+) serves as cofactor. It depends on Mn(2+) as a cofactor.

The enzyme catalyses O-phospho-L-seryl-[protein] + H2O = L-seryl-[protein] + phosphate. It catalyses the reaction O-phospho-L-threonyl-[protein] + H2O = L-threonyl-[protein] + phosphate. The polypeptide is Probable protein phosphatase 2C 69 (Arabidopsis thaliana (Mouse-ear cress)).